The following is a 98-amino-acid chain: Integration host factor subunit alpha (98 aa).

The protein belongs to the bacterial histone-like protein family. Heterodimer of an alpha and a beta chain.

In terms of biological role, this protein is one of the two subunits of integration host factor, a specific DNA-binding protein that functions in genetic recombination as well as in transcriptional and translational control. This chain is Integration host factor subunit alpha, found in Actinobacillus pleuropneumoniae serotype 5b (strain L20).